Consider the following 199-residue polypeptide: Imidazole glycerol phosphate synthase subunit HisH 2 (199 aa).

One can recognise a Glutamine amidotransferase type-1 domain in the interval 1–199; that stretch reads MIAVIDVSGN…NNFLSLESKC (199 aa). Cys-76 serves as the catalytic Nucleophile. Active-site residues include His-177 and Glu-179.

As to quaternary structure, heterodimer of HisH and HisF.

Its subcellular location is the cytoplasm. It carries out the reaction 5-[(5-phospho-1-deoxy-D-ribulos-1-ylimino)methylamino]-1-(5-phospho-beta-D-ribosyl)imidazole-4-carboxamide + L-glutamine = D-erythro-1-(imidazol-4-yl)glycerol 3-phosphate + 5-amino-1-(5-phospho-beta-D-ribosyl)imidazole-4-carboxamide + L-glutamate + H(+). It catalyses the reaction L-glutamine + H2O = L-glutamate + NH4(+). It participates in amino-acid biosynthesis; L-histidine biosynthesis; L-histidine from 5-phospho-alpha-D-ribose 1-diphosphate: step 5/9. Functionally, IGPS catalyzes the conversion of PRFAR and glutamine to IGP, AICAR and glutamate. The HisH subunit provides the glutamine amidotransferase activity that produces the ammonia necessary to HisF for the synthesis of IGP and AICAR. The polypeptide is Imidazole glycerol phosphate synthase subunit HisH 2 (Legionella pneumophila (strain Lens)).